The sequence spans 908 residues: Protein translocase subunit SecA (908 aa).

ATP is bound by residues Q87, 105-109, and D512; that span reads GEGKT. A disordered region spans residues 876-908; sequence QAPMIRDGEKVGRNDPCPCGSGRKYKQCHGKLS. Residues C892, C894, C903, and H904 each coordinate Zn(2+). Basic residues predominate over residues 898-908; that stretch reads RKYKQCHGKLS.

It belongs to the SecA family. Monomer and homodimer. Part of the essential Sec protein translocation apparatus which comprises SecA, SecYEG and auxiliary proteins SecDF-YajC and YidC. Requires Zn(2+) as cofactor.

It is found in the cell inner membrane. Its subcellular location is the cytoplasm. It catalyses the reaction ATP + H2O + cellular proteinSide 1 = ADP + phosphate + cellular proteinSide 2.. Its function is as follows. Part of the Sec protein translocase complex. Interacts with the SecYEG preprotein conducting channel. Has a central role in coupling the hydrolysis of ATP to the transfer of proteins into and across the cell membrane, serving both as a receptor for the preprotein-SecB complex and as an ATP-driven molecular motor driving the stepwise translocation of polypeptide chains across the membrane. In Shewanella baltica (strain OS185), this protein is Protein translocase subunit SecA.